The sequence spans 440 residues: Transposon Ty1-BR Gag polyprotein (440 aa).

3 stretches are compositionally biased toward polar residues: residues 1-10, 48-60, and 127-152; these read MESQQLSNYP, TKANSQQTTTPAS, and QSQFPQYPSSVGTPLSTPSPESGNTF. Disordered stretches follow at residues 1-93, 126-173, and 352-440; these read MESQ…MMTQ, PQSQ…RPPP, and GSRN…PETY. Positions 153–165 are enriched in low complexity; that stretch reads TDSSSADSDMTST. Positions 299–401 are RNA-binding; sequence NNGIHINNKV…NSKSKTARAH (103 aa). A compositionally biased stretch (low complexity) spans 402–418; that stretch reads NVSTSNNSPSTDNDSIS. Ser-416 bears the Phosphoserine mark. Residues 419–428 show a composition bias toward polar residues; sequence KSTTEPIQLN. A compositionally biased stretch (basic and acidic residues) spans 429-440; the sequence is NKHDLHLRPETY.

Homotrimer.

The protein resides in the cytoplasm. Functionally, capsid protein (CA) is the structural component of the virus-like particle (VLP), forming the shell that encapsulates the retrotransposons dimeric RNA genome. The particles are assembled from trimer-clustered units and there are holes in the capsid shells that allow for the diffusion of macromolecules. CA also has nucleocapsid-like chaperone activity, promoting primer tRNA(i)-Met annealing to the multipartite primer-binding site (PBS), dimerization of Ty1 RNA and initiation of reverse transcription. This is Transposon Ty1-BR Gag polyprotein (TY1A-BR) from Saccharomyces cerevisiae (strain ATCC 204508 / S288c) (Baker's yeast).